The following is a 199-amino-acid chain: 7-methyl-GTP pyrophosphatase (199 aa).

Residue Asp74 is the Proton acceptor of the active site.

It belongs to the Maf family. YceF subfamily. It depends on a divalent metal cation as a cofactor.

The protein localises to the cytoplasm. It catalyses the reaction N(7)-methyl-GTP + H2O = N(7)-methyl-GMP + diphosphate + H(+). Nucleoside triphosphate pyrophosphatase that hydrolyzes 7-methyl-GTP (m(7)GTP). May have a dual role in cell division arrest and in preventing the incorporation of modified nucleotides into cellular nucleic acids. The polypeptide is 7-methyl-GTP pyrophosphatase (Cupriavidus pinatubonensis (strain JMP 134 / LMG 1197) (Cupriavidus necator (strain JMP 134))).